The sequence spans 145 residues: Neuromedin-S (145 aa).

The first 27 residues, 1 to 27 (MRSEKHLLPLPLLLAICCLGTLHLSSG), serve as a signal peptide directing secretion. Propeptides lie at residues 28 to 89 (FPQS…HEIY) and 92 to 117 (FLFQ…AEYT). Asn136 carries the post-translational modification Asparagine amide. Residues 140–145 (VSINEH) constitute a propeptide that is removed on maturation.

Belongs to the NmU family. As to expression, expressed by the skin glands.

The protein localises to the secreted. In terms of biological role, stimulates uterine smooth muscle contraction (EC(50)=1.6 nM). Synthetic peptide NmS-17 induces calcium mobilization in CHO cells transfected with either human FM-3/GPR66 (EC(50)=0.085 nM) or FM-4/TGR-1 (EC(50)=0.231 nM) NmU/NmS receptors. The sequence is that of Neuromedin-S (nms) from Bombina maxima (Giant fire-bellied toad).